The primary structure comprises 132 residues: Acid shock protein (132 aa).

The signal sequence occupies residues 1–21 (MKKVLALVVAAAMGLSSAAFA). The segment covering 20–45 (FAAETTTSSAAPATATATTTKAAPAK) has biased composition (low complexity). Residues 20–132 (FAAETTTSSA…AAKPAAQPAA (113 aa)) are disordered. A propeptide spanning residues 22–90 (AETTTSSAAP…TTAPVEQKAQ (69 aa)) is cleaved from the precursor. Positions 62-71 (AAKKHHKKAV) are enriched in basic residues. Low complexity-rich tracts occupy residues 76–90 (AAPA…QKAQ) and 100–109 (AKPAVAQKAQ). The span at 110–119 (AAKKHHKKAV) shows a compositional bias: basic residues.

It belongs to the Asr family. Post-translationally, proteolytic processing gives rise to the active protein.

It localises to the periplasm. Functionally, required for growth and/or survival at acidic conditions. The polypeptide is Acid shock protein (Enterobacter sp. (strain 638)).